A 168-amino-acid chain; its full sequence is Putative flavin-containing monooxygenase FMO GS-OX-like 11 (168 aa).

17-22 is a binding site for FAD; sequence GAGAAG.

The protein belongs to the FMO family. The cofactor is FAD.

Its function is as follows. Catalyzes the conversion of methylthioalkyl glucosinolates of any chain length into methylsulfinylalkyl glucosinolates. This is Putative flavin-containing monooxygenase FMO GS-OX-like 11 from Arabidopsis thaliana (Mouse-ear cress).